Consider the following 92-residue polypeptide: MGLIPKLLAGLVLLTLCVENGSGQYWSYGVRPGGKRNIEPLVDSFQEMAKEIDQLAEPQHFECTLHQPRSPLRDLKGALESLMEEETGQKKI.

A signal peptide spans Met1–Gly23. Gln24 carries the post-translational modification Pyrrolidone carboxylic acid. Gly33 is modified (glycine amide).

This sequence belongs to the GnRH family. Post-translationally, the precursor is cleaved by ACE, which removes the Gly-Lys-Arg peptide at the C-terminus, leading to mature hormone. The mature form of Gonadoliberin-1 is also cleaved and degraded by ACE.

It localises to the secreted. Stimulates the secretion of gonadotropins; it stimulates the secretion of both luteinizing and follicle-stimulating hormones. This is Progonadoliberin-1 (GNRH1) from Cavia porcellus (Guinea pig).